The chain runs to 376 residues: 1-deoxy-D-xylulose 5-phosphate reductoisomerase (376 aa).

Positions 12, 13, 14, 15, 39, and 116 each coordinate NADPH. Lys-117 provides a ligand contact to 1-deoxy-D-xylulose 5-phosphate. Glu-118 provides a ligand contact to NADPH. A Mn(2+)-binding site is contributed by Asp-142. 1-deoxy-D-xylulose 5-phosphate contacts are provided by Ser-143, Glu-144, Ser-164, and His-187. Residue Glu-144 coordinates Mn(2+). Gly-193 is an NADPH binding site. 1-deoxy-D-xylulose 5-phosphate is bound by residues Ser-200, Asn-205, Lys-206, and Glu-209. Glu-209 contributes to the Mn(2+) binding site.

Belongs to the DXR family. The cofactor is Mg(2+). Mn(2+) is required as a cofactor.

It catalyses the reaction 2-C-methyl-D-erythritol 4-phosphate + NADP(+) = 1-deoxy-D-xylulose 5-phosphate + NADPH + H(+). The protein operates within isoprenoid biosynthesis; isopentenyl diphosphate biosynthesis via DXP pathway; isopentenyl diphosphate from 1-deoxy-D-xylulose 5-phosphate: step 1/6. Catalyzes the NADPH-dependent rearrangement and reduction of 1-deoxy-D-xylulose-5-phosphate (DXP) to 2-C-methyl-D-erythritol 4-phosphate (MEP). The sequence is that of 1-deoxy-D-xylulose 5-phosphate reductoisomerase from Thermotoga maritima (strain ATCC 43589 / DSM 3109 / JCM 10099 / NBRC 100826 / MSB8).